The following is a 30-amino-acid chain: Photosystem I reaction center subunit XII (30 aa).

A helical transmembrane segment spans residues 7–29; the sequence is IYTVLCIALLAGILAIRLGSTLY.

It belongs to the PsaM family.

The protein resides in the plastid. Its subcellular location is the chloroplast thylakoid membrane. This is Photosystem I reaction center subunit XII from Phaeodactylum tricornutum (strain CCAP 1055/1).